The primary structure comprises 455 residues: J protein JJJ2 (455 aa).

Residues 12–76 (TYYSILGVPT…QLRAEYDKKL (65 aa)) enclose the J domain. The tract at residues 104–241 (RNSKPYEQQP…RKKSEKKATP (138 aa)) is disordered. Over residues 133-144 (NSNPHNENSSNN) the composition is skewed to low complexity. Residues 156-168 (TLSKDSEDKHGTD) show a composition bias toward basic and acidic residues.

Its subcellular location is the cytoplasm. The protein resides in the nucleus. The protein is J protein JJJ2 (JJJ2) of Candida glabrata (strain ATCC 2001 / BCRC 20586 / JCM 3761 / NBRC 0622 / NRRL Y-65 / CBS 138) (Yeast).